The chain runs to 125 residues: Type-4 ice-structuring protein (125 aa).

The first 20 residues, 1–20, serve as a signal peptide directing secretion; that stretch reads MKYTLIAAIVVLALAQGTLA.

The protein belongs to the apolipoprotein A1/A4/E family.

Its subcellular location is the secreted. In terms of biological role, antifreeze proteins lower the blood freezing point. This Gadus morhua (Atlantic cod) protein is Type-4 ice-structuring protein.